Reading from the N-terminus, the 157-residue chain is MHFLFLIILCCLISSCNLKSVYSEKYSRNKDLEAITVEPIRTIEGAEFYNRLTRLLPQKAKAKYLLKAELSVTTMPATIEKNSNVLREDINQLVRYKLIDIESQKILIEEKFCQNTSYNAIFTPYATNVERYGTGIGLAYQAAEEIRSRLILYFIRK.

This is an uncharacterized protein from Rickettsia prowazekii (strain Madrid E).